Here is a 183-residue protein sequence, read N- to C-terminus: Ribulose bisphosphate carboxylase small subunit, chloroplastic (183 aa).

A chloroplast-targeting transit peptide spans 1-58 (MASSMLSTAAVACINRASPAQASMVAPFTGLKSTSAFPTTRKTTTDITSIASNGGRVQ).

This sequence belongs to the RuBisCO small chain family. As to quaternary structure, heterohexadecamer of 8 large and 8 small subunits.

Its subcellular location is the plastid. The protein resides in the chloroplast. In terms of biological role, ruBisCO catalyzes two reactions: the carboxylation of D-ribulose 1,5-bisphosphate, the primary event in carbon dioxide fixation, as well as the oxidative fragmentation of the pentose substrate. Both reactions occur simultaneously and in competition at the same active site. Although the small subunit is not catalytic it is essential for maximal activity. This chain is Ribulose bisphosphate carboxylase small subunit, chloroplastic, found in Hevea brasiliensis (Para rubber tree).